A 337-amino-acid polypeptide reads, in one-letter code: Protein RecA (337 aa).

ATP is bound at residue 66–73 (GPESSGKT).

The protein belongs to the RecA family.

Its subcellular location is the cytoplasm. Can catalyze the hydrolysis of ATP in the presence of single-stranded DNA, the ATP-dependent uptake of single-stranded DNA by duplex DNA, and the ATP-dependent hybridization of homologous single-stranded DNAs. It interacts with LexA causing its activation and leading to its autocatalytic cleavage. This chain is Protein RecA, found in Mesomycoplasma hyopneumoniae (strain J / ATCC 25934 / NCTC 10110) (Mycoplasma hyopneumoniae).